A 250-amino-acid polypeptide reads, in one-letter code: Probable transcriptional regulatory protein DP2908 (250 aa).

The protein belongs to the TACO1 family.

It localises to the cytoplasm. The polypeptide is Probable transcriptional regulatory protein DP2908 (Desulfotalea psychrophila (strain LSv54 / DSM 12343)).